The primary structure comprises 409 residues: Gamma-glutamyl phosphate reductase (409 aa).

This sequence belongs to the gamma-glutamyl phosphate reductase family.

Its subcellular location is the cytoplasm. The catalysed reaction is L-glutamate 5-semialdehyde + phosphate + NADP(+) = L-glutamyl 5-phosphate + NADPH + H(+). Its pathway is amino-acid biosynthesis; L-proline biosynthesis; L-glutamate 5-semialdehyde from L-glutamate: step 2/2. Catalyzes the NADPH-dependent reduction of L-glutamate 5-phosphate into L-glutamate 5-semialdehyde and phosphate. The product spontaneously undergoes cyclization to form 1-pyrroline-5-carboxylate. This is Gamma-glutamyl phosphate reductase from Bartonella tribocorum (strain CIP 105476 / IBS 506).